Consider the following 251-residue polypeptide: MNLNSIPAFDDNYIWVLNDEAGRCLIVDPGDAEPVLNAIAANNWQPEAIFLTHHHHDHVGGVKELVKKFPQIVVYGPQETQDKGTTRVVKDGEIAFVLGHEFSVIATPGHTLGHICYFSKPYLFCGDTLFSGGCGRLFEGTPSQMYQSLKKLSALPDDTLVCCAHEYTLSNMKFALSILPHDLSINDYYRKVKELRAKNQITLPVILKNERQINVFLRTEDIDLINVINEETLLQQPEERFAWLRSKKDRF.

Zn(2+) is bound by residues His53, His55, Asp57, His58, His110, Asp127, and His165.

It belongs to the metallo-beta-lactamase superfamily. Glyoxalase II family. Monomer. It depends on Zn(2+) as a cofactor.

It catalyses the reaction an S-(2-hydroxyacyl)glutathione + H2O = a 2-hydroxy carboxylate + glutathione + H(+). The protein operates within secondary metabolite metabolism; methylglyoxal degradation; (R)-lactate from methylglyoxal: step 2/2. Its function is as follows. Thiolesterase that catalyzes the hydrolysis of S-D-lactoyl-glutathione to form glutathione and D-lactic acid. This is Hydroxyacylglutathione hydrolase from Escherichia coli O17:K52:H18 (strain UMN026 / ExPEC).